Here is a 100-residue protein sequence, read N- to C-terminus: Small ribosomal subunit protein uS14c (100 aa).

Basic and acidic residues predominate over residues 28 to 45 (KKEIKKVPSLSEKMEIHG). Residues 28–59 (KKEIKKVPSLSEKMEIHGKLQSPPRNSAPTRL) form a disordered region.

The protein belongs to the universal ribosomal protein uS14 family. As to quaternary structure, part of the 30S ribosomal subunit.

Its subcellular location is the plastid. It localises to the chloroplast. In terms of biological role, binds 16S rRNA, required for the assembly of 30S particles. The protein is Small ribosomal subunit protein uS14c of Nandina domestica (Heavenly bamboo).